The sequence spans 718 residues: Putative proline-rich receptor-like protein kinase PERK11 (718 aa).

Positions 1–256 (MDKVQQQADL…GGTSQQSNES (256 aa)) are disordered. The Extracellular portion of the chain corresponds to 1–262 (MDKVQQQADL…SNESNYTEKT (262 aa)). Composition is skewed to pro residues over residues 45-105 (ATSP…PPQS), 115-132 (IPFP…PPPS), and 157-167 (LPSPPSTPFSP). Composition is skewed to low complexity over residues 168 to 203 (PSQE…LQPL) and 211 to 244 (SNRV…ANSN). N-linked (GlcNAc...) asparagine glycans are attached at residues Asn-231, Asn-254, and Asn-257. A helical membrane pass occupies residues 263–283 (VIGIGIAGVLVILFIAGVFFV). Over 284–718 (RRKQKKGSSS…RAFNTSHRNH (435 aa)) the chain is Cytoplasmic. The disordered stretch occupies residues 314-348 (HYRQKPGNGNSSAQNSSPDTNSLGNPKHGRGTPDS). Residues 320–337 (GNGNSSAQNSSPDTNSLG) are compositionally biased toward polar residues. Thr-359 is subject to Phosphothreonine. The region spanning 370 to 649 (FCKSFVVGEG…VRALDTRDDL (280 aa)) is the Protein kinase domain. ATP is bound by residues 376-384 (VGEGGFGCV) and Lys-398. Tyr-443 carries the phosphotyrosine modification. The active-site Proton acceptor is the Asp-494. Phosphoserine occurs at positions 498 and 527. 2 positions are modified to phosphothreonine: Thr-528 and Thr-533. Tyr-541 carries the post-translational modification Phosphotyrosine. Residues 683–718 (SSDLGTNTGYYPSQDYATSHEYESESRAFNTSHRNH) form a disordered region. Composition is skewed to polar residues over residues 685-699 (DLGT…QDYA) and 709-718 (RAFNTSHRNH).

The protein belongs to the protein kinase superfamily. Ser/Thr protein kinase family. In terms of tissue distribution, mostly expressed in flower buds.

The protein localises to the cell membrane. The catalysed reaction is L-seryl-[protein] + ATP = O-phospho-L-seryl-[protein] + ADP + H(+). It carries out the reaction L-threonyl-[protein] + ATP = O-phospho-L-threonyl-[protein] + ADP + H(+). This is Putative proline-rich receptor-like protein kinase PERK11 (PERK11) from Arabidopsis thaliana (Mouse-ear cress).